The chain runs to 372 residues: Tyrosine--tRNA ligase (372 aa).

5 residues coordinate L-tyrosine: Tyr37, Tyr169, Gln173, Asp176, and Gln191. A 'KMSKS' region motif is present at residues 246–250 (KMSKS). Lys249 contacts ATP.

The protein belongs to the class-I aminoacyl-tRNA synthetase family. TyrS type 4 subfamily. As to quaternary structure, homodimer.

It localises to the cytoplasm. The catalysed reaction is tRNA(Tyr) + L-tyrosine + ATP = L-tyrosyl-tRNA(Tyr) + AMP + diphosphate + H(+). In terms of biological role, catalyzes the attachment of tyrosine to tRNA(Tyr) in a two-step reaction: tyrosine is first activated by ATP to form Tyr-AMP and then transferred to the acceptor end of tRNA(Tyr). This Pyrobaculum calidifontis (strain DSM 21063 / JCM 11548 / VA1) protein is Tyrosine--tRNA ligase.